Here is a 430-residue protein sequence, read N- to C-terminus: Citrate synthase (430 aa).

Catalysis depends on residues His305 and Asp363.

This sequence belongs to the citrate synthase family. Homohexamer.

It carries out the reaction oxaloacetate + acetyl-CoA + H2O = citrate + CoA + H(+). It participates in carbohydrate metabolism; tricarboxylic acid cycle; isocitrate from oxaloacetate: step 1/2. Its activity is regulated as follows. Allosterically inhibited by NADH. The protein is Citrate synthase (gltA) of Coxiella burnetii (strain RSA 493 / Nine Mile phase I).